Reading from the N-terminus, the 1053-residue chain is Polyphosphate kinase (1053 aa).

Disordered stretches follow at residues 23-155 (LKIN…QLME), 200-245 (VQNP…TKSK), and 302-328 (NNNNNDFKSSTMIGKPFSSGGDGSTSP). Low complexity predominate over residues 32–50 (STTTTTSTTTTTTTTTSTS). Acidic residues predominate over residues 81-102 (VDFEDDYDEESSSFDEEDEDSA). Positions 143 to 155 (TTANPVQNCQLME) are enriched in polar residues. The span at 215–239 (SSGSSSSSSSNNNNSNSNSNGNCNS) shows a compositional bias: low complexity. The Phosphohistidine intermediate role is filled by His800. The tract at residues 1027-1053 (RSSPIDEDSQTQFMNQTNQKHPVIWSK) is disordered. The segment covering 1036–1046 (QTQFMNQTNQK) has biased composition (polar residues).

Belongs to the polyphosphate kinase 1 (PPK1) family. In terms of assembly, hexamer. May form higher oligomeric structures in the presence of ATP.

It localises to the vesicle. It catalyses the reaction [phosphate](n) + ATP = [phosphate](n+1) + ADP. In terms of biological role, catalyzes the reversible transfer of the terminal phosphate of ATP to form a long-chain polyphosphate (polyP). Produces polyP in a broad range of chain lengths (50-300 Pi residues). Involved in development (growth and fruiting body formation), sporulation, phagocytosis, cell division and the late stages of cytokinesis. The protein is Polyphosphate kinase (ppkA) of Dictyostelium discoideum (Social amoeba).